A 274-amino-acid polypeptide reads, in one-letter code: Large ribosomal subunit protein uL2 (274 aa).

Disordered regions lie at residues 1–23 (MAIKIYRPTSPGRRHHSVSSFEE) and 222–242 (GSAMSPNNHPHGGGECRSPIG).

It belongs to the universal ribosomal protein uL2 family. Part of the 50S ribosomal subunit. Forms a bridge to the 30S subunit in the 70S ribosome.

One of the primary rRNA binding proteins. Required for association of the 30S and 50S subunits to form the 70S ribosome, for tRNA binding and peptide bond formation. It has been suggested to have peptidyltransferase activity; this is somewhat controversial. Makes several contacts with the 16S rRNA in the 70S ribosome. This chain is Large ribosomal subunit protein uL2, found in Dehalococcoides mccartyi (strain ATCC BAA-2266 / KCTC 15142 / 195) (Dehalococcoides ethenogenes (strain 195)).